A 207-amino-acid chain; its full sequence is Large ribosomal subunit protein uL4 (207 aa).

Positions 44–78 (MRQGTHKTKNRAEVSGGGRKPWRQKGTGRARQGSI) are disordered.

The protein belongs to the universal ribosomal protein uL4 family. In terms of assembly, part of the 50S ribosomal subunit.

Its function is as follows. One of the primary rRNA binding proteins, this protein initially binds near the 5'-end of the 23S rRNA. It is important during the early stages of 50S assembly. It makes multiple contacts with different domains of the 23S rRNA in the assembled 50S subunit and ribosome. In terms of biological role, this protein when expressed in E.coli represses the endogenous S10 operon; this may not occur in B.stearothermophilus however. Forms part of the polypeptide exit tunnel. The sequence is that of Large ribosomal subunit protein uL4 (rplD) from Geobacillus stearothermophilus (Bacillus stearothermophilus).